The primary structure comprises 409 residues: Elongation factor Tu, chloroplastic (409 aa).

Residues 10–214 form the tr-type G domain; that stretch reads KPHVNIGTIG…KIDEYIPTPE (205 aa). Positions 19 to 26 are G1; that stretch reads GHVDHGKT. Position 19 to 26 (19 to 26) interacts with GTP; sequence GHVDHGKT. T26 serves as a coordination point for Mg(2+). A G2 region spans residues 60-64; it reads GITIN. The tract at residues 81–84 is G3; it reads DCPG. Residues 81–85 and 136–139 contribute to the GTP site; these read DCPGH and NKAD. The tract at residues 136–139 is G4; that stretch reads NKAD. The interval 174 to 176 is G5; that stretch reads SAL.

The protein belongs to the TRAFAC class translation factor GTPase superfamily. Classic translation factor GTPase family. EF-Tu/EF-1A subfamily.

It localises to the plastid. The protein localises to the chloroplast. It catalyses the reaction GTP + H2O = GDP + phosphate + H(+). In terms of biological role, GTP hydrolase that promotes the GTP-dependent binding of aminoacyl-tRNA to the A-site of ribosomes during protein biosynthesis. In Rhodomonas salina (Cryptomonas salina), this protein is Elongation factor Tu, chloroplastic (tufA).